Here is a 529-residue protein sequence, read N- to C-terminus: Variant surface glycoprotein MITAT 1.6 (529 aa).

Residues 1-24 form the signal peptide; sequence MAVHRALAAYAISLYVLLPRKSGA. Disulfide bonds link Cys-39–Cys-170 and Cys-147–Cys-214. Asn-456 is a glycosylation site (N-linked (GlcNAc...) (high mannose) asparagine). The GPI-anchor amidated aspartate moiety is linked to residue Asp-506. Positions 507-529 are cleaved as a propeptide — removed in mature form; that stretch reads SSILVTKKFALTVVSAAFVALLF.

In terms of processing, N-glycosylated; glycan is composed of 6 to 9 mannose residues.

It localises to the cell membrane. VSG forms a coat on the surface of the parasite. The trypanosome evades the immune response of the host by expressing a series of antigenically distinct VSGs from an estimated 1000 VSG genes. The sequence is that of Variant surface glycoprotein MITAT 1.6 from Trypanosoma brucei brucei.